The chain runs to 637 residues: Chaperone protein HtpG (637 aa).

The interval Met1–Arg335 is a; substrate-binding. Residues Glu336 to Arg559 form a b region. The segment at Phe560–Asn637 is c.

This sequence belongs to the heat shock protein 90 family. As to quaternary structure, homodimer.

It localises to the cytoplasm. In terms of biological role, molecular chaperone. Has ATPase activity. The chain is Chaperone protein HtpG from Ehrlichia ruminantium (strain Welgevonden).